Reading from the N-terminus, the 241-residue chain is Deoxyribose-phosphate aldolase (241 aa).

D95 (proton donor/acceptor) is an active-site residue. K159 (schiff-base intermediate with acetaldehyde) is an active-site residue. Catalysis depends on K188, which acts as the Proton donor/acceptor.

Belongs to the DeoC/FbaB aldolase family. DeoC type 1 subfamily.

It is found in the cytoplasm. It catalyses the reaction 2-deoxy-D-ribose 5-phosphate = D-glyceraldehyde 3-phosphate + acetaldehyde. The protein operates within carbohydrate degradation; 2-deoxy-D-ribose 1-phosphate degradation; D-glyceraldehyde 3-phosphate and acetaldehyde from 2-deoxy-alpha-D-ribose 1-phosphate: step 2/2. Functionally, catalyzes a reversible aldol reaction between acetaldehyde and D-glyceraldehyde 3-phosphate to generate 2-deoxy-D-ribose 5-phosphate. The protein is Deoxyribose-phosphate aldolase of Rhodopirellula baltica (strain DSM 10527 / NCIMB 13988 / SH1).